The primary structure comprises 133 residues: Small ribosomal subunit protein uS8 (133 aa).

This sequence belongs to the universal ribosomal protein uS8 family. In terms of assembly, part of the 30S ribosomal subunit. Contacts proteins S5 and S12.

Functionally, one of the primary rRNA binding proteins, it binds directly to 16S rRNA central domain where it helps coordinate assembly of the platform of the 30S subunit. This is Small ribosomal subunit protein uS8 from Protochlamydia amoebophila (strain UWE25).